The following is a 522-amino-acid chain: Echinocystic acid 23-monooxygenase (522 aa).

A helical; Signal-anchor for type II membrane protein transmembrane segment spans residues 4 to 24 (LPYIATSIACIVILRWALNMM). N-linked (GlcNAc...) asparagine glycosylation is present at N190. A heme-binding site is contributed by C470.

The protein belongs to the cytochrome P450 family. Heme is required as a cofactor. In terms of tissue distribution, mainly expressed in flowers and flower buds, to a lesser extent in young leaves and, at low levels, in old leaves, stems and roots.

The protein localises to the membrane. The protein operates within secondary metabolite biosynthesis; terpenoid biosynthesis. Its function is as follows. Component of the oleanane-type triterpene saponins (e.g. saponarioside A and saponarioside B) biosynthetic pathway, leading to the production of natural products with detergent properties used as traditional sources of soap. An oxidoreductase that facilitates the oxidation of the methyl group to a carboxyl group at the C-23 position of echinocystic acid, resulting in the formation of quillaic acid (QA). The polypeptide is Echinocystic acid 23-monooxygenase (Saponaria officinalis (Common soapwort)).